A 569-amino-acid polypeptide reads, in one-letter code: Mitogen-activated protein kinase 7 (569 aa).

The Protein kinase domain occupies tyrosine 13–phenylalanine 304. Residues valine 19–valine 27 and lysine 42 contribute to the ATP site. Aspartate 139 functions as the Proton acceptor in the catalytic mechanism. The residue at position 175 (threonine 175) is a Phosphothreonine. Residues threonine 175–tyrosine 177 carry the TXY motif. A Phosphotyrosine modification is found at tyrosine 177. Residues threonine 401–valine 420 are disordered.

It belongs to the protein kinase superfamily. CMGC Ser/Thr protein kinase family. MAP kinase subfamily. Post-translationally, dually phosphorylated on Thr-175 and Tyr-177, which activates the enzyme.

The enzyme catalyses L-seryl-[protein] + ATP = O-phospho-L-seryl-[protein] + ADP + H(+). It carries out the reaction L-threonyl-[protein] + ATP = O-phospho-L-threonyl-[protein] + ADP + H(+). With respect to regulation, activated by threonine and tyrosine phosphorylation. The protein is Mitogen-activated protein kinase 7 (MPK7) of Oryza sativa subsp. japonica (Rice).